The following is a 685-amino-acid chain: MSDSNQGNNQQNYQQYSQNGNQQQGNNRYQGYQAYNAQAQPAGGYYQNYQGYSGYQQGGYQQYNPDAGYQQQYNPQGGYQQYNPQGGYQQQFNPQGGRGNYKNFNYNNNLQGYQAGFQPQSQGMSLNDFQKQQKQAAPKPKKTLKLVSSSGIKLANATKKVGTKPAESDKKEEEKSAETKEPTKEPTKVEEPVKKEEKPVQTEEKTEEKSELPKVEDLKISESTHNTNNANVTSADALIKEQEEEVDDEVVNDMFGGKDHVSLIFMGHVDAGKSTMGGNLLYLTGSVDKRTIEKYEREAKDAGRQGWYLSWVMDTNKEERNDGKTIEVGKAYFETEKRRYTILDAPGHKMYVSEMIGGASQADVGVLVISARKGEYETGFERGGQTREHALLAKTQGVNKMVVVVNKMDDPTVNWSKERYDQCVSNVSNFLRAIGYNIKTDVVFMPVSGYSGANLKDHVDPKECPWYTGPTLLEYLDTMNHVDRHINAPFMLPIAAKMKDLGTIVEGKIESGHIKKGQSTLLMPNKTAVEIQNIYNETENEVDMAMCGEQVKLRIKGVEEEDISPGFVLTSPKNPIKSVTKFVAQIAIVELKSIIAAGFSCVMHVHTAIEEVHIVKLLHKLEKGTNRKSKKPPAFAKKGMKVIAVLETEAPVCVETYQDYPQLGRFTLRDQGTTIAIGKIVKIAE.

Disordered regions lie at residues 1 to 34 (MSDS…GYQA), 63 to 99 (YNPD…GGRG), and 112 to 234 (GYQA…NVTS). S2 carries the N-acetylserine modification. The interval 2–239 (SDSNQGNNQQ…ANVTSADALI (238 aa)) is interaction with PAB1. The segment at 5–135 (NQGNNQQNYQ…LNDFQKQQKQ (131 aa)) is prion domain (PrD). Residues 117–129 (FQPQSQGMSLNDF) show a composition bias toward polar residues. The interval 139–249 (KPKKTLKLVS…KEQEEEVDDE (111 aa)) is charged. The segment covering 166-222 (AESDKKEEEKSAETKEPTKEPTKVEEPVKKEEKPVQTEEKTEEKSELPKVEDLKISE) has biased composition (basic and acidic residues). Residues 223–234 (STHNTNNANVTS) are compositionally biased toward polar residues. One can recognise a tr-type G domain in the interval 258–484 (KDHVSLIFMG…YLDTMNHVDR (227 aa)). Residues 267–274 (GHVDAGKS) form a G1 region. 267-274 (GHVDAGKS) is a binding site for GTP. A G2 region spans residues 323–327 (GKTIE). Positions 344 to 347 (DAPG) are G3. GTP-binding positions include 406 to 409 (NKMD) and 449 to 450 (GY). The interval 406 to 409 (NKMD) is G4. The interval 448–450 (SGY) is G5. S571 is subject to Phosphoserine.

The protein belongs to the TRAFAC class translation factor GTPase superfamily. Classic translation factor GTPase family. ERF3 subfamily. Heterodimer of two subunits, one of which binds GTP. Interacts with polyadenylate-binding protein PAB1, and TPA1.

It localises to the cytoplasm. It catalyses the reaction GTP + H2O = GDP + phosphate + H(+). In terms of biological role, GTPase component of the eRF1-eRF3-GTP ternary complex, a ternary complex that mediates translation termination in response to the termination codons UAA, UAG and UGA. SUP35/eRF3 mediates SUP45/eRF1 delivery to stop codons: The eRF1-eRF3-GTP complex binds to a stop codon in the ribosomal A-site. GTP hydrolysis by SUP35/eRF3 induces a conformational change that leads to its dissociation, permitting SUP45/eRF1 to accommodate fully in the A-site. Recruited by polyadenylate-binding protein PAB1 to poly(A)-tails of mRNAs. Interaction with PAB1 is also required for regulation of normal mRNA decay through translation termination-coupled poly(A) shortening. This Saccharomyces cerevisiae (strain ATCC 204508 / S288c) (Baker's yeast) protein is Eukaryotic peptide chain release factor GTP-binding subunit (SUP35).